The following is a 562-amino-acid chain: Glycine betaine/proline/choline/ectoine transporter VP1456 (562 aa).

Transmembrane regions (helical) follow at residues 68–88 (PVFGISAGLVVFCLISLLLVE), 110–130 (FFMWSTNFFLLFAVGLLFSPL), 147–167 (VSWLSMLFAAGMGIGLLFWSV), 203–223 (WGVHGWSIYALVALALAFFAF), 243–263 (AWGWLGHVIDILAVLSTLFGL), 287–307 (GIGTQMVVIAFVTFIAVLSVV), 322–342 (MIVAFALLIFITFITFDTAMG), 373–393 (WTVFYWAWWVSWSPFVGMFIA), 404–424 (FLFAVIVIPTLVTLVWMSVFG), 456–476 (VLPYSSVISILSIVLILVFFI), 503–523 (IFWACIEGSIAAVMLWVGGKE), and 531–551 (GVVATGLPFTFVLLLMCVSLV).

Belongs to the BCCT transporter (TC 2.A.15) family.

It is found in the cell inner membrane. Functionally, involved in the uptake of osmoprotectants. Can transport glycine betaine, proline, choline and ectoine. This is Glycine betaine/proline/choline/ectoine transporter VP1456 from Vibrio parahaemolyticus serotype O3:K6 (strain RIMD 2210633).